The sequence spans 387 residues: Fetuin-B (387 aa).

A signal peptide spans 1–18 (MNVLLLLVLCTLAMGCGA). Cystatin fetuin-B-type domains are found at residues 25–139 (AARP…YNCT) and 150–258 (MTCP…VTCS). A glycan (N-linked (GlcNAc...) asparagine) is linked at asparagine 37. Intrachain disulfides connect cysteine 94–cysteine 105, cysteine 118–cysteine 138, cysteine 152–cysteine 155, cysteine 217–cysteine 225, and cysteine 238–cysteine 257. Residue asparagine 137 is glycosylated (N-linked (GlcNAc...) asparagine). The interval 264-306 (APTPRGENATVNQRPANPSKTEELQQQNTAPTNSPTKAVPKGS) is disordered. Residue asparagine 271 is glycosylated (N-linked (GlcNAc...) asparagine). A compositionally biased stretch (polar residues) spans 272–299 (ATVNQRPANPSKTEELQQQNTAPTNSPT). 2 O-linked (GalNAc...) threonine glycosylation sites follow: threonine 292 and threonine 295. Serine 320 carries the phosphoserine modification. The disordered stretch occupies residues 366 to 387 (KEQRSAECPGPAQKGYPFILPS).

This sequence belongs to the fetuin family. As to expression, liver and testis.

It localises to the secreted. Functionally, protease inhibitor required for egg fertilization. Required to prevent premature zona pellucida hardening before fertilization, probably by inhibiting the protease activity of ASTL, a protease that mediates the cleavage of ZP2 and triggers zona pellucida hardening. The sequence is that of Fetuin-B (FETUB) from Bos taurus (Bovine).